Here is a 280-residue protein sequence, read N- to C-terminus: Small ribosomal subunit protein uS3 (280 aa).

A KH type-2 domain is found at 38-106; the sequence is IRRLLSTGLE…QVQLNILEVR (69 aa). The segment at 215–280 is disordered; it reads AAAAPAGAER…PAAEPQSTES (66 aa). Over residues 238–280 the composition is skewed to low complexity; sequence SGASGTTATGTEAGRAAASADESTAAGQPAEAAPAAEPQSTES.

Belongs to the universal ribosomal protein uS3 family. In terms of assembly, part of the 30S ribosomal subunit. Forms a tight complex with proteins S10 and S14.

Functionally, binds the lower part of the 30S subunit head. Binds mRNA in the 70S ribosome, positioning it for translation. The protein is Small ribosomal subunit protein uS3 of Mycolicibacterium paratuberculosis (strain ATCC BAA-968 / K-10) (Mycobacterium paratuberculosis).